The sequence spans 347 residues: NADH-ubiquinone oxidoreductase chain 2 (347 aa).

11 helical membrane passes run 2-22, 25-45, 56-76, 96-116, 122-142, 149-169, 178-197, 202-219, 241-261, 278-298, and 323-343; these read SPYV…MTLI, HWLT…PLMT, AIKY…SAIF, FMMT…FWVP, IPLL…ISIF, LNMS…GWGG, ILAY…IMIY, ILNL…FMVL, MIII…TGFM, LAMM…RIIY, and ILPI…TPMF.

It belongs to the complex I subunit 2 family. Core subunit of respiratory chain NADH dehydrogenase (Complex I) which is composed of 45 different subunits. Interacts with TMEM242.

It localises to the mitochondrion inner membrane. It catalyses the reaction a ubiquinone + NADH + 5 H(+)(in) = a ubiquinol + NAD(+) + 4 H(+)(out). Functionally, core subunit of the mitochondrial membrane respiratory chain NADH dehydrogenase (Complex I) which catalyzes electron transfer from NADH through the respiratory chain, using ubiquinone as an electron acceptor. Essential for the catalytic activity and assembly of complex I. This Metachirus nudicaudatus (Brown four-eyed opossum) protein is NADH-ubiquinone oxidoreductase chain 2.